Consider the following 135-residue polypeptide: Early E3 15.3 kDa protein (135 aa).

The protein belongs to the adenoviridae E3_15 family.

Its function is as follows. Protects virus-infected cells from TNF-induced cytolysis. The protein is Early E3 15.3 kDa protein of Human adenovirus B serotype 7 (HAdV-7).